The primary structure comprises 898 residues: DNA gyrase subunit A (898 aa).

2 disordered regions span residues 1-22 and 36-56; these read MSDD…DDDS and EEEK…EKEG. The region spanning 97-562 is the Topo IIA-type catalytic domain; it reads LPDARDGLKP…VMSSINNEDL (466 aa). Catalysis depends on Tyr-185, which acts as the O-(5'-phospho-DNA)-tyrosine intermediate. Residues 589 to 595 carry the GyrA-box motif; the sequence is QRRGGVG.

This sequence belongs to the type II topoisomerase GyrA/ParC subunit family. Heterotetramer, composed of two GyrA and two GyrB chains. In the heterotetramer, GyrA contains the active site tyrosine that forms a transient covalent intermediate with DNA, while GyrB binds cofactors and catalyzes ATP hydrolysis.

It localises to the cytoplasm. It carries out the reaction ATP-dependent breakage, passage and rejoining of double-stranded DNA.. A type II topoisomerase that negatively supercoils closed circular double-stranded (ds) DNA in an ATP-dependent manner to modulate DNA topology and maintain chromosomes in an underwound state. Negative supercoiling favors strand separation, and DNA replication, transcription, recombination and repair, all of which involve strand separation. Also able to catalyze the interconversion of other topological isomers of dsDNA rings, including catenanes and knotted rings. Type II topoisomerases break and join 2 DNA strands simultaneously in an ATP-dependent manner. In Metamycoplasma arthritidis (strain 158L3-1) (Mycoplasma arthritidis), this protein is DNA gyrase subunit A.